Reading from the N-terminus, the 465-residue chain is Ribulose bisphosphate carboxylase large chain (465 aa).

Lysine 4 bears the N6,N6,N6-trimethyllysine mark. Threonine 163 provides a ligand contact to substrate. Lysine 165 acts as the Proton acceptor in catalysis. A substrate-binding site is contributed by lysine 167. The Mg(2+) site is built by lysine 191, aspartate 193, and glutamate 194. Lysine 191 is subject to N6-carboxylysine. The Proton acceptor role is filled by histidine 284. Substrate contacts are provided by arginine 285, histidine 317, and serine 369.

This sequence belongs to the RuBisCO large chain family. Type I subfamily. Heterohexadecamer of 8 large chains and 8 small chains; disulfide-linked. The disulfide link is formed within the large subunit homodimers. It depends on Mg(2+) as a cofactor. The disulfide bond which can form in the large chain dimeric partners within the hexadecamer appears to be associated with oxidative stress and protein turnover.

It is found in the plastid. The protein localises to the chloroplast. It carries out the reaction 2 (2R)-3-phosphoglycerate + 2 H(+) = D-ribulose 1,5-bisphosphate + CO2 + H2O. It catalyses the reaction D-ribulose 1,5-bisphosphate + O2 = 2-phosphoglycolate + (2R)-3-phosphoglycerate + 2 H(+). Functionally, ruBisCO catalyzes two reactions: the carboxylation of D-ribulose 1,5-bisphosphate, the primary event in carbon dioxide fixation, as well as the oxidative fragmentation of the pentose substrate in the photorespiration process. Both reactions occur simultaneously and in competition at the same active site. In Trochodendron aralioides (Wheel tree), this protein is Ribulose bisphosphate carboxylase large chain.